A 520-amino-acid chain; its full sequence is Glucose-6-phosphate isomerase (520 aa).

Glu-327 acts as the Proton donor in catalysis. Residues His-358 and Lys-486 contribute to the active site.

The protein belongs to the GPI family.

Its subcellular location is the cytoplasm. It catalyses the reaction alpha-D-glucose 6-phosphate = beta-D-fructose 6-phosphate. It participates in carbohydrate biosynthesis; gluconeogenesis. Its pathway is carbohydrate degradation; glycolysis; D-glyceraldehyde 3-phosphate and glycerone phosphate from D-glucose: step 2/4. Functionally, catalyzes the reversible isomerization of glucose-6-phosphate to fructose-6-phosphate. This chain is Glucose-6-phosphate isomerase, found in Bordetella avium (strain 197N).